Consider the following 664-residue polypeptide: DNA ligase (664 aa).

NAD(+) contacts are provided by residues 32–36 (DAEYD), 81–82 (SL), and Glu113. Lys115 serves as the catalytic N6-AMP-lysine intermediate. Residues Arg136, Glu173, Lys289, and Lys313 each coordinate NAD(+). Zn(2+)-binding residues include Cys407, Cys410, Cys425, and Cys431. The 79-residue stretch at 586 to 664 (ASEQPFAGKT…EEQLQAALQS (79 aa)) folds into the BRCT domain.

Belongs to the NAD-dependent DNA ligase family. LigA subfamily. Mg(2+) serves as cofactor. The cofactor is Mn(2+).

It catalyses the reaction NAD(+) + (deoxyribonucleotide)n-3'-hydroxyl + 5'-phospho-(deoxyribonucleotide)m = (deoxyribonucleotide)n+m + AMP + beta-nicotinamide D-nucleotide.. Its function is as follows. DNA ligase that catalyzes the formation of phosphodiester linkages between 5'-phosphoryl and 3'-hydroxyl groups in double-stranded DNA using NAD as a coenzyme and as the energy source for the reaction. It is essential for DNA replication and repair of damaged DNA. This Aeromonas salmonicida (strain A449) protein is DNA ligase.